The primary structure comprises 384 residues: Neuropeptide Y receptor type 1 (384 aa).

Residues 1–44 lie on the Extracellular side of the membrane; it reads MNSTLFSQVENHSVHSNFSEKNAQLLAFENDDCHLPLAMIFTLA. N-linked (GlcNAc...) asparagine glycosylation is found at Asn-2, Asn-11, and Asn-17. Residues 45–65 traverse the membrane as a helical segment; the sequence is LAYGAVIILGVSGNLALIIII. Topologically, residues 66-76 are cytoplasmic; the sequence is LKQKEMRNVTN. The helical transmembrane segment at 77-97 threads the bilayer; the sequence is ILIVNLSFSDLLVAIMCLPFT. Residues 98-116 lie on the Extracellular side of the membrane; that stretch reads FVYTLMDHWVFGEAMCKLN. Cys-113 and Cys-198 form a disulfide bridge. The chain crosses the membrane as a helical span at residues 117–137; that stretch reads PFVQCVSITVSIFSLVLIAVE. At 138–154 the chain is on the cytoplasmic side; it reads RHQLIINPRGWRPNNRH. Residues 155–175 form a helical membrane-spanning segment; that stretch reads AYVGIAVIWVLAVASSLPFLI. Residues 176–211 are Extracellular-facing; that stretch reads YQVMTDEPFQNVTLDAYKDKYVCFDQFPSDSHRLSY. The helical transmembrane segment at 212–232 threads the bilayer; the sequence is TTLLLVLQYFGPLCFIFICYF. Over 233–260 the chain is Cytoplasmic; that stretch reads KIYIRLKRRNNMMDKMRDNKYRSSETKR. A helical membrane pass occupies residues 261–281; it reads INIMLLSIVVAFAVCWLPLTI. Residues 282-299 lie on the Extracellular side of the membrane; that stretch reads FNTVFDWNHQIIATCNHN. The chain crosses the membrane as a helical span at residues 300 to 320; that stretch reads LLFLLCHLTAMISTCVNPIFY. Over 321–384 the chain is Cytoplasmic; the sequence is GFLNKNFQRD…INNNDDNEKI (64 aa). The S-palmitoyl cysteine moiety is linked to residue Cys-338. Residue Ser-368 is modified to Phosphoserine.

This sequence belongs to the G-protein coupled receptor 1 family.

The protein localises to the cell membrane. In terms of biological role, receptor for neuropeptide Y and peptide YY. The rank order of affinity of this receptor for pancreatic polypeptides is NPY &gt; [Pro-34] PYY, PYY and [Leu-31, Pro-34] NPY &gt; NPY (2-36) &gt; [Ile-31, Gln-34] PP and PYY (3-36) &gt; PP &gt; NPY free acid. The protein is Neuropeptide Y receptor type 1 (NPY1R) of Homo sapiens (Human).